A 367-amino-acid polypeptide reads, in one-letter code: Peptide chain release factor 2 (367 aa).

N5-methylglutamine is present on glutamine 251.

This sequence belongs to the prokaryotic/mitochondrial release factor family. In terms of processing, methylated by PrmC. Methylation increases the termination efficiency of RF2.

It localises to the cytoplasm. Its function is as follows. Peptide chain release factor 2 directs the termination of translation in response to the peptide chain termination codons UGA and UAA. This Nautilia profundicola (strain ATCC BAA-1463 / DSM 18972 / AmH) protein is Peptide chain release factor 2.